Here is a 487-residue protein sequence, read N- to C-terminus: MMKGHFCIQNNKTLLFKSLIHPTSSHNLSPYLYFFLSSNKLNSSNISSSNFVITSNIRGYSSSQYSNKVYSWGSGLNGKLGHGLDETKIVVPKEIEIKEDDDNNRVFNQGKINKITSGTTYSIFSGYDQIKDRQVFYGCGDNRDAQLIVGNGKIQSLENIELLESPMLKSDQMKGKQLKQLISGTYHNACILNDSNSNNNNNNNKDRSLILLWGASNSGQIGSPEYNRVQYDPYNNKVLSEIGIKKISMGATFTIALSNDGKLYSFGSSTFNELGNGDMFNEREPKLIDNQLLQDNEIIDLECGFFHTVALTSDNKILTWGRNQESQCFPVPEGTGKGSFTNVQYLDTSSLGDHDKIIQIGASNLNSYILTENGNIYSIGSNDHGQCGIEKSNFKKGILNKIKIGDDGNIKVKKFYSRFKTVIVETTDGRFFGWGSNFDHQLALETRCIYFTPMELNNLNRLHKDYNIIDISISLSHCISLNSNPQK.

5 RCC1 repeats span residues 66–127 (SNKV…FSGY), 207–259 (RSLI…ALSN), 260–313 (DGKL…ALTS), 373–426 (NGNI…IVET), and 428–483 (DGRF…SLNS).

This is RCC1 repeat-containing protein DDB_G0284033 from Dictyostelium discoideum (Social amoeba).